The chain runs to 288 residues: Pteridine reductase 1 (288 aa).

Arg17–Ser40 contributes to the NADP(+) binding site. Residue Ser175 participates in substrate binding. The Proton acceptor role is filled by Tyr194.

Belongs to the short-chain dehydrogenases/reductases (SDR) family. In terms of assembly, homotetramer.

It catalyses the reaction (6R)-L-erythro-5,6,7,8-tetrahydrobiopterin + 2 NADP(+) = L-erythro-biopterin + 2 NADPH + 2 H(+). Its pathway is cofactor biosynthesis; tetrahydrobiopterin biosynthesis; tetrahydrobiopterin from biopterin: step 1/1. Exhibits a NADPH-dependent biopterin reductase activity. Has good activity with folate and significant activity with dihydrofolate and dihydrobiopterin, but not with quinonoid dihydrobiopterin. Confers resistance to methotrexate (MTX). The chain is Pteridine reductase 1 (PTR1) from Leishmania major.